Here is a 421-residue protein sequence, read N- to C-terminus: Alpha-1-antitrypsin-related protein (421 aa).

The signal sequence occupies residues 1-21 (MPFSVSWGILLLAGLCCLVPS). N-linked (GlcNAc...) asparagine glycans are attached at residues N56, N110, N148, and N274.

This sequence belongs to the serpin family. Interacts with CANX and PDIA3. Post-translationally, glycosylated. In terms of tissue distribution, expressed in the liver, leukocytes and testis. Also detected in brain, colon, uterus, esophagus, spleen, trachea, kidney and lung.

The protein localises to the endoplasmic reticulum. Its function is as follows. Putative serine protease inhibitor. The polypeptide is Alpha-1-antitrypsin-related protein (SERPINA2) (Homo sapiens (Human)).